A 194-amino-acid polypeptide reads, in one-letter code: Accessory gene regulator protein B (194 aa).

5 helical membrane-spanning segments follow: residues 44 to 64 (IVVY…LTHL), 80 to 100 (SSLL…YLII), 107 to 127 (FVLL…APAA), 142 to 162 (KILS…TKEP), and 163 to 183 (VNKL…PIFF).

The protein belongs to the AgrB family.

It is found in the cell membrane. Its function is as follows. Essential for the production of a quorum sensing system signal molecule, the autoinducing peptide (AIP). This quorum sensing system is responsible for the regulation of the expression of virulence factor genes. Involved in the proteolytic processing of AgrD, the precursor of AIP. The chain is Accessory gene regulator protein B from Staphylococcus epidermidis.